A 123-amino-acid polypeptide reads, in one-letter code: Large ribosomal subunit protein uL29x (123 aa).

This sequence belongs to the universal ribosomal protein uL29 family.

This is Large ribosomal subunit protein uL29x (RPL35C) from Arabidopsis thaliana (Mouse-ear cress).